Here is a 504-residue protein sequence, read N- to C-terminus: Terminase, large subunit (504 aa).

An ATPase activity region spans residues 1 to 204 (MTRGERVIAF…LSIWIDDAVK (204 aa)). The short motif at 54-61 (IARKNGKT) is the Walker A motif element. The Walker B motif signature appears at 149–154 (LAILDE). The segment at 326-415 (FPFFWTPQKT…LPLVEFGQGF (90 aa)) is nuclease activity. Residue aspartate 471 participates in Mg(2+) binding.

The protein belongs to the Hendrixvirinae large terminase family. Homopentamer; forms a ring-like structure through which genomic DNA is translocated into the capsid. Interacts with the terminase small subunit; the active complex is composed of a pentamer ring of terminase large subunits and a nonamer ring of terminase small subunits. Interacts with the portal protein; this interaction allows the packaging of viral DNA. Mg(2+) serves as cofactor. It depends on Mn(2+) as a cofactor.

Its activity is regulated as follows. Inhibited by zinc. The terminase large subunit acts as an ATP driven molecular motor necessary for viral DNA translocation into empty capsids and as an endonuclease that cuts the viral genome from the concetamer to initiate and to end a packaging reaction. The terminase lies at a unique vertex of the procapsid and is composed of two subunits, a small terminase subunit involved in viral DNA recognition (packaging sequence), and a large terminase subunit possessing endonucleolytic and ATPase activities. Both terminase subunits heterooligomerize and are docked on the portal protein to form the packaging machine. Packaging initiates by TerS recognizing the packaging sequence in the viral DNA. The nuclease activity of TerL cuts the viral DNA and the terminase-DNA complex binds to the portal of a procapsid shell. DNA is translocated into the capsid, powered by the packaging ATPase in TerL, which continues until the next site is encountered at which point the motor stops and again cuts the DNA to release the nucleocapsid filled with a unit-length genome ('unit length' packaging). This is Terminase, large subunit (2) from Escherichia coli (Bacteriophage HK97).